A 282-amino-acid chain; its full sequence is ATP phosphoribosyltransferase (282 aa).

The protein belongs to the ATP phosphoribosyltransferase family. Long subfamily. It depends on Mg(2+) as a cofactor.

It is found in the cytoplasm. It catalyses the reaction 1-(5-phospho-beta-D-ribosyl)-ATP + diphosphate = 5-phospho-alpha-D-ribose 1-diphosphate + ATP. It functions in the pathway amino-acid biosynthesis; L-histidine biosynthesis; L-histidine from 5-phospho-alpha-D-ribose 1-diphosphate: step 1/9. Its activity is regulated as follows. Feedback inhibited by histidine. In terms of biological role, catalyzes the condensation of ATP and 5-phosphoribose 1-diphosphate to form N'-(5'-phosphoribosyl)-ATP (PR-ATP). Has a crucial role in the pathway because the rate of histidine biosynthesis seems to be controlled primarily by regulation of HisG enzymatic activity. The protein is ATP phosphoribosyltransferase of Pyrobaculum islandicum (strain DSM 4184 / JCM 9189 / GEO3).